The following is a 1270-amino-acid chain: Glycine betaine reductase ATRR (1270 aa).

The adenylation (A) domain stretch occupies residues 14 to 418 (FTQQVRASPN…MIKLRGYSVV (405 aa)). Residues 528 to 605 (KEDPIGIEDI…GHLDTVRAIR (78 aa)) form the Carrier domain. S565 carries the post-translational modification O-(pantetheine 4'-phosphoryl)serine. A carboxylic acid reductase domain R1 region spans residues 643 to 937 (KTVLLTGVTG…EPLSWDDWVA (295 aa)). Residues 1026-1256 (PLSGKVAVVT…IYALRQPEHV (231 aa)) are aldehyde reductase domain R2.

The protein belongs to the NRP synthetase family.

With respect to regulation, the tetramethylammonium ion, which mimics the head group of glycine betaine, acts as a competitive inhibitor of ATRR A domain, whereas the potency decreased by three orders of magnitude with dimethylammonium. Choline is a mixed inhibitor for both glycine betaine reductase and aldehyde reductase activity but more potent in competition against glycine betaine in the first reduction step. Therefore, choline could act as a feedback inhibitor to regulate ATRR enzymatic activity. The lowered binding affinity of choline to R2 favors the release of choline after glycine betaine aldehyde reduction to avoid direct product inhibition. NRPS-like enzyme with an unusual domain architecture that converts back glycine betaine to choline via a 2-step reduction mechanism, and thereby can be an alternative source of choline. Permits direct reutilization of endogenously stored glycine betaine for on-demand biosynthesis of choline and choline derivatives, including phospholipid phosphatidylcholine (PC) which has an essential role in maintaining membrane integrity and functionality, or choline-O-sulfate, a mean for intracellular sulfate storage. Glycine betaine is activated by the adenylation (A) domain, and transferred to the thiolation (T) domain. Movement of the phosphopantetheine arm to the thioester reductase domain R1 then allows thioester reduction by NADPH of glycine betainoyl thioester to glycine betaine aldehyde, which is in turn reduced to choline by the aldehyde reductase domain R2. In Emericella nidulans (strain FGSC A4 / ATCC 38163 / CBS 112.46 / NRRL 194 / M139) (Aspergillus nidulans), this protein is Glycine betaine reductase ATRR.